The following is a 343-amino-acid chain: Heat-inducible transcription repressor HrcA (343 aa).

It belongs to the HrcA family.

Its function is as follows. Negative regulator of class I heat shock genes (grpE-dnaK-dnaJ and groELS operons). Prevents heat-shock induction of these operons. The sequence is that of Heat-inducible transcription repressor HrcA from Mycobacterium tuberculosis (strain ATCC 25177 / H37Ra).